A 941-amino-acid chain; its full sequence is Coiled-coil domain-containing protein 39 (941 aa).

Coiled coils occupy residues Ala-16–Ile-122, Ala-164–Ile-273, Gln-306–Val-605, and Ile-665–Asp-825. The tract at residues Pro-868 to Lys-941 is disordered. 2 stretches are compositionally biased toward low complexity: residues Ser-871–Ser-903 and Ser-914–Val-934. 2 positions are modified to phosphoserine: Ser-892 and Ser-900.

This sequence belongs to the CCDC39 family. As to expression, mainly expressed in nasal brushings and, to a lesser extent, in lungs and testis.

It is found in the cytoplasm. Its subcellular location is the cytoskeleton. The protein localises to the cilium axoneme. In terms of biological role, required for assembly of dynein regulatory complex (DRC) and inner dynein arm (IDA) complexes, which are responsible for ciliary beat regulation, thereby playing a central role in motility in cilia and flagella. Probably acts together with CCDC40 to form a molecular ruler that determines the 96 nanometer (nm) repeat length and arrangements of components in cilia and flagella. Not required for outer dynein arm complexes assembly. The chain is Coiled-coil domain-containing protein 39 from Homo sapiens (Human).